Here is a 276-residue protein sequence, read N- to C-terminus: Putative pyruvate, phosphate dikinase regulatory protein (276 aa).

150–157 (GVSRTSKT) serves as a coordination point for ADP.

Belongs to the pyruvate, phosphate/water dikinase regulatory protein family. PDRP subfamily.

It catalyses the reaction N(tele)-phospho-L-histidyl/L-threonyl-[pyruvate, phosphate dikinase] + ADP = N(tele)-phospho-L-histidyl/O-phospho-L-threonyl-[pyruvate, phosphate dikinase] + AMP + H(+). The enzyme catalyses N(tele)-phospho-L-histidyl/O-phospho-L-threonyl-[pyruvate, phosphate dikinase] + phosphate + H(+) = N(tele)-phospho-L-histidyl/L-threonyl-[pyruvate, phosphate dikinase] + diphosphate. Its function is as follows. Bifunctional serine/threonine kinase and phosphorylase involved in the regulation of the pyruvate, phosphate dikinase (PPDK) by catalyzing its phosphorylation/dephosphorylation. This chain is Putative pyruvate, phosphate dikinase regulatory protein, found in Lacticaseibacillus casei (strain BL23) (Lactobacillus casei).